The sequence spans 937 residues: Glycine dehydrogenase (decarboxylating) (937 aa).

K686 carries the N6-(pyridoxal phosphate)lysine modification.

The protein belongs to the GcvP family. As to quaternary structure, the glycine cleavage system is composed of four proteins: P, T, L and H. Pyridoxal 5'-phosphate serves as cofactor.

It catalyses the reaction N(6)-[(R)-lipoyl]-L-lysyl-[glycine-cleavage complex H protein] + glycine + H(+) = N(6)-[(R)-S(8)-aminomethyldihydrolipoyl]-L-lysyl-[glycine-cleavage complex H protein] + CO2. Functionally, the glycine cleavage system catalyzes the degradation of glycine. The P protein binds the alpha-amino group of glycine through its pyridoxal phosphate cofactor; CO(2) is released and the remaining methylamine moiety is then transferred to the lipoamide cofactor of the H protein. This Mesorhizobium japonicum (strain LMG 29417 / CECT 9101 / MAFF 303099) (Mesorhizobium loti (strain MAFF 303099)) protein is Glycine dehydrogenase (decarboxylating).